A 440-amino-acid chain; its full sequence is Putative postmeiotic segregation increased 2-like protein 1 (440 aa).

Basic and acidic residues predominate over residues 164-178; the sequence is RVEHNVESSRWEPRR. Residues 164-215 form a disordered region; sequence RVEHNVESSRWEPRRRGACGSRGGNFPSPRGGSGVASLERAESSSTEPAKAI. The 135-residue stretch at 230–364 folds into the Histidine kinase domain; the sequence is PVVPSLSTAV…MTVSVKQLFS (135 aa).

This sequence belongs to the DNA mismatch repair MutL/HexB family. As to expression, highly expressed in kidney, spleen, adrenal gland, ovary and cerebellum and to a lower extent in liver, esophagus, stomach, duodenum, colon, bladder, uterus, lung, pancreas and cerebrum. Not expressed in heart.

This chain is Putative postmeiotic segregation increased 2-like protein 1 (PMS2P1), found in Homo sapiens (Human).